Reading from the N-terminus, the 166-residue chain is NAD(P)H-quinone oxidoreductase subunit I, chloroplastic (166 aa).

4Fe-4S ferredoxin-type domains follow at residues 55 to 84 (GRIH…VDWK) and 95 to 124 (LNYS…MTEE). The [4Fe-4S] cluster site is built by Cys64, Cys67, Cys70, Cys74, Cys104, Cys107, Cys110, and Cys114.

Belongs to the complex I 23 kDa subunit family. In terms of assembly, NDH is composed of at least 16 different subunits, 5 of which are encoded in the nucleus. Requires [4Fe-4S] cluster as cofactor.

Its subcellular location is the plastid. It is found in the chloroplast thylakoid membrane. The catalysed reaction is a plastoquinone + NADH + (n+1) H(+)(in) = a plastoquinol + NAD(+) + n H(+)(out). It catalyses the reaction a plastoquinone + NADPH + (n+1) H(+)(in) = a plastoquinol + NADP(+) + n H(+)(out). In terms of biological role, NDH shuttles electrons from NAD(P)H:plastoquinone, via FMN and iron-sulfur (Fe-S) centers, to quinones in the photosynthetic chain and possibly in a chloroplast respiratory chain. The immediate electron acceptor for the enzyme in this species is believed to be plastoquinone. Couples the redox reaction to proton translocation, and thus conserves the redox energy in a proton gradient. This is NAD(P)H-quinone oxidoreductase subunit I, chloroplastic from Ambrosia trifida (Giant ragweed).